Consider the following 262-residue polypeptide: Small ribosomal subunit protein eS1 (262 aa).

Belongs to the eukaryotic ribosomal protein eS1 family. Component of the small ribosomal subunit. Mature ribosomes consist of a small (40S) and a large (60S) subunit. The 40S subunit contains about 33 different proteins and 1 molecule of RNA (18S). The 60S subunit contains about 49 different proteins and 3 molecules of RNA (25S, 5.8S and 5S).

It is found in the cytoplasm. This is Small ribosomal subunit protein eS1 from Cryptosporidium hominis.